Consider the following 39-residue polypeptide: Conotoxin ArMSGL-013 (39 aa).

Residues 1–5 (RRSLT) constitute a propeptide that is removed on maturation. 3 disulfide bridges follow: Cys12–Cys24, Cys16–Cys33, and Cys23–Cys37. Trp38 is modified (tryptophan amide).

The protein belongs to the conotoxin O3 superfamily. As to expression, expressed by the venom duct.

It localises to the secreted. This is Conotoxin ArMSGL-013 from Conus arenatus (Sand-dusted cone).